The following is a 331-amino-acid chain: Phenol 2-monooxygenase, oxygenase component DmpL (331 aa).

This sequence belongs to the TmoE/XamoE family. In terms of assembly, the multicomponent enzyme phenol hydroxylase is formed by DmpL (P1 component), DmpM (P2 component), DmpN (P3 component), DmpO (P4 component) and DmpP (P5 component). The oxygenase component is a dimer composed of three subunits, DmpL, DmpN and DmpO (DmpLNO). DmpL interacts with the auxiliary protein DmpK (P0 component).

The catalysed reaction is phenol + NADH + O2 + H(+) = catechol + NAD(+) + H2O. It participates in aromatic compound metabolism; phenol degradation. With respect to regulation, requires DmpM for efficient turnover. The activity of DmpLNO oxygenase is inhibited by dithiothreitol (DTT) by a mechanism apparently involving H(2)O(2) generation. Part of a multicomponent enzyme which catalyzes the degradation of phenol and some of its methylated derivatives. DmpL, DmpN and DmpO form the oxygenase component of the complex. Required for growth on phenol and for in vitro phenol hydroxylase activity. The chain is Phenol 2-monooxygenase, oxygenase component DmpL from Pseudomonas sp. (strain CF600).